A 338-amino-acid polypeptide reads, in one-letter code: (-)-alpha-amorphene synthase ((2E,6E)-farnesyl diphosphate cyclizing) (338 aa).

Positions 105 and 109 each coordinate Mg(2+). The DDXXE motif motif lies at 105 to 109; sequence DDRAE. Arg-196 is a substrate binding site. Ser-246 contacts Mg(2+). Lys-249 is a binding site for substrate. Residue Glu-250 coordinates Mg(2+). Substrate is bound at residue 327-328; it reads RY.

The protein belongs to the terpene synthase family. It depends on Mg(2+) as a cofactor.

It catalyses the reaction (2E,6E)-farnesyl diphosphate = (-)-alpha-amorphene + diphosphate. It participates in secondary metabolite biosynthesis; terpenoid biosynthesis. In terms of biological role, catalyzes the conversion of (2E,6E)-farnesyl diphosphate (FPP) to yield the bicyclic sesquiterpene (1R,6S,7S)-(-)-alpha-amorphene via a probable 1,6-cyclization, which could involve the abstraction of the pyrophosphate from FPP to yield a (R)-bisabolyl cation. The only accepted substrate is (2E,6E)-farnesyl diphosphate (FPP). In Streptomyces viridochromogenes (strain DSM 40736 / JCM 4977 / BCRC 1201 / Tue 494), this protein is (-)-alpha-amorphene synthase ((2E,6E)-farnesyl diphosphate cyclizing).